The following is a 360-amino-acid chain: Ribosomal RNA large subunit methyltransferase F (360 aa).

The tract at residues 1–38 is disordered; that stretch reads MTRSTTPPMRAKHSSAKRSPSRSAAKVNPVSVKPNKPL. Positions 10–20 are enriched in basic residues; the sequence is RAKHSSAKRSP.

Belongs to the methyltransferase superfamily. METTL16/RlmF family.

The protein localises to the cytoplasm. It catalyses the reaction adenosine(1618) in 23S rRNA + S-adenosyl-L-methionine = N(6)-methyladenosine(1618) in 23S rRNA + S-adenosyl-L-homocysteine + H(+). In terms of biological role, specifically methylates the adenine in position 1618 of 23S rRNA. This is Ribosomal RNA large subunit methyltransferase F from Shewanella frigidimarina (strain NCIMB 400).